The following is a 435-amino-acid chain: MFEYQQPDPRGHFGIYGGSFVSETLTHAINELKAAYAKYQFDPAFVAEFNYELAHFVGRPSPVYHADRMSREQGGAQIFLKREDLNHTGAHKINNTIGQAMLARRMGKPRVIAETGAGQHGVATATICARYGLECVVYMGSEDVKRQSPNVYRMNLLGATVVPVESGSRTLKDALNEAMRDWVANVDNTFYIIGTVAGPHPYPMMVRDFQSVIGKECLVQMPEMLQAAGCHTTQPDAVVACVGGGSNAMGIFHPYIAHEATRLIGVEAAGLGMDSGKHSASLQRGSPGVLHGNRTYVLQDDNGQVTETHSISAGLDYPGVGPEHAFLKDIGRAEYVGITDQEALAAFHYLCRTEGIIPALESSHAVAYAMKLAKTMRPDQSILVNLSGRGDKDIGTVADLSHADFYCRPSCKGQSVKGADNAQPSANQQVVKVAQ.

Lys92 is modified (N6-(pyridoxal phosphate)lysine).

It belongs to the TrpB family. In terms of assembly, tetramer of two alpha and two beta chains. Pyridoxal 5'-phosphate serves as cofactor.

It catalyses the reaction (1S,2R)-1-C-(indol-3-yl)glycerol 3-phosphate + L-serine = D-glyceraldehyde 3-phosphate + L-tryptophan + H2O. The protein operates within amino-acid biosynthesis; L-tryptophan biosynthesis; L-tryptophan from chorismate: step 5/5. In terms of biological role, the beta subunit is responsible for the synthesis of L-tryptophan from indole and L-serine. This Albidiferax ferrireducens (strain ATCC BAA-621 / DSM 15236 / T118) (Rhodoferax ferrireducens) protein is Tryptophan synthase beta chain.